Consider the following 338-residue polypeptide: DNA-directed RNA polymerase subunit alpha (338 aa).

Positions 1–234 (MIQKNWQELI…DQLNVFVNFE (234 aa)) are alpha N-terminal domain (alpha-NTD). An alpha C-terminal domain (alpha-CTD) region spans residues 250-338 (FNPALLKKVD…ELAKRFEEHY (89 aa)).

This sequence belongs to the RNA polymerase alpha chain family. Homodimer. The RNAP catalytic core consists of 2 alpha, 1 beta, 1 beta' and 1 omega subunit. When a sigma factor is associated with the core the holoenzyme is formed, which can initiate transcription.

It catalyses the reaction RNA(n) + a ribonucleoside 5'-triphosphate = RNA(n+1) + diphosphate. DNA-dependent RNA polymerase catalyzes the transcription of DNA into RNA using the four ribonucleoside triphosphates as substrates. This is DNA-directed RNA polymerase subunit alpha from Beijerinckia indica subsp. indica (strain ATCC 9039 / DSM 1715 / NCIMB 8712).